A 402-amino-acid chain; its full sequence is Shaggy-related protein kinase GSK2 (402 aa).

A disordered region spans residues 1 to 38 (MDQPAPAPEPMLLDAQPPAAVACDKKQQEGEAPYAEGN). One can recognise a Protein kinase domain in the interval 63–347 (YMAERVVGTG…ALDACAHPFF (285 aa)). ATP-binding positions include 69–77 (VGTGSFGIV) and K92. D188 functions as the Proton acceptor in the catalytic mechanism.

The protein belongs to the protein kinase superfamily. CMGC Ser/Thr protein kinase family. GSK-3 subfamily. In terms of assembly, interacts with DLT. Interacts with OFP8. Interacts with GRF4. Interacts with PUB24. Interacts with SMOS1. Post-translationally, autophosphorylated. As to expression, expressed in lamina joints, vascular tissue and nodes.

Its subcellular location is the cytoplasm. The protein resides in the nucleus. It catalyses the reaction L-seryl-[protein] + ATP = O-phospho-L-seryl-[protein] + ADP + H(+). The enzyme catalyses L-threonyl-[protein] + ATP = O-phospho-L-threonyl-[protein] + ADP + H(+). Functionally, serine-threonine kinase that acts as a negative regulator of brassinosteroid (BR) signaling. Phosphorylates DLT and BZR1, two positive regulators that mediates several BR responses. Phosphorylation of DLT and BZR1 inhibits their activities in BR signaling. Phosphorylates OFP8, a positive regulator of BR responses. Phosphorylated OFP8 shuttles from the nucleus to the cytoplasm where it is degraded by the proteasome. Phosphorylates the E3 ubiquitin-protein ligase PUB24, a negative regulator of BR signaling, which targets BZR1 and promotes its degradation via the 26S proteasome. Phosphorylation of PUB24 increases its stability. Phosphorylates the AP2-ERF transcription factor SMOS1, a positive regulator of BR signaling, which cooperatively functions in a transactivating complex with BZR1 to enhance the transcription of BR biosynthetic genes. Phosphorylation of SMOS1 leads to its degradation by an unknown mechanism. This Oryza sativa subsp. japonica (Rice) protein is Shaggy-related protein kinase GSK2.